A 399-amino-acid chain; its full sequence is Enolase (399 aa).

Glutamine 149 contacts (2R)-2-phosphoglycerate. The Proton donor role is filled by glutamate 191. The Mg(2+) site is built by aspartate 227, glutamate 268, and aspartate 293. Positions 318, 347, 348, and 369 each coordinate (2R)-2-phosphoglycerate. Lysine 318 functions as the Proton acceptor in the catalytic mechanism.

It belongs to the enolase family. Mg(2+) is required as a cofactor.

It localises to the cytoplasm. The protein localises to the secreted. Its subcellular location is the cell surface. It carries out the reaction (2R)-2-phosphoglycerate = phosphoenolpyruvate + H2O. The protein operates within carbohydrate degradation; glycolysis; pyruvate from D-glyceraldehyde 3-phosphate: step 4/5. Catalyzes the reversible conversion of 2-phosphoglycerate (2-PG) into phosphoenolpyruvate (PEP). It is essential for the degradation of carbohydrates via glycolysis. The chain is Enolase from Archaeoglobus fulgidus (strain ATCC 49558 / DSM 4304 / JCM 9628 / NBRC 100126 / VC-16).